The primary structure comprises 247 residues: Sensory rhodopsin-1 (247 aa).

Residues 1-4 (MTGA) are Extracellular-facing. A helical transmembrane segment spans residues 5–26 (VSAAYWIAAVAFLVGLGITAAL). Residues 27–35 (YAKLGESED) lie on the Cytoplasmic side of the membrane. The chain crosses the membrane as a helical span at residues 36–57 (RGRLAALAVIPGFAGLAYAGMA). The Extracellular portion of the chain corresponds to 58–71 (LGIGTVTVNGAELV). The chain crosses the membrane as a helical span at residues 72–93 (GLRYVDWIVTTPLLVGFIGYVA). At 94-96 (GAS) the chain is on the cytoplasmic side. A helical transmembrane segment spans residues 97–119 (RRAIAGVMLADALMIAFGAGAVV). The Extracellular portion of the chain corresponds to 120–123 (TGGT). The chain crosses the membrane as a helical span at residues 124-151 (LKWVLFGVSSIFHVTLFAYLYVVFPRAV). Residues 152-154 (PDD) lie on the Cytoplasmic side of the membrane. A helical transmembrane segment spans residues 155-182 (PMQRGLFSLLKNHVGLLWLAYPFVWLMG). Residues 183-190 (PAGIGFTT) are Extracellular-facing. The chain crosses the membrane as a helical span at residues 191–223 (GVGAALTYAFLDVLAKVPYVYFFYARRQAFTDV). Lys-206 bears the N6-(retinylidene)lysine mark. Residues 224–247 (VSAATADREDATDAVGDGAPTAAD) lie on the Cytoplasmic side of the membrane.

It belongs to the archaeal/bacterial/fungal opsin family. As to quaternary structure, interacts with HTR-I.

The protein localises to the cell membrane. In terms of biological role, involved in the control of phototaxis. Mediates both photoattractant (in the orange light) and photophobic (in the near UV light) responses. The signal is then transmitted to the sensory rhodopsin I transducer (HTR-I). This chain is Sensory rhodopsin-1 (sop1), found in Halobacterium sp. (strain SG1).